The following is a 431-amino-acid chain: Enolase (431 aa).

Q163 lines the (2R)-2-phosphoglycerate pocket. E205 serves as the catalytic Proton donor. 3 residues coordinate Mg(2+): D242, E288, and D315. (2R)-2-phosphoglycerate contacts are provided by K340, R369, S370, and K391. The Proton acceptor role is filled by K340.

It belongs to the enolase family. Mg(2+) serves as cofactor.

It localises to the cytoplasm. It is found in the secreted. The protein resides in the cell surface. The enzyme catalyses (2R)-2-phosphoglycerate = phosphoenolpyruvate + H2O. The protein operates within carbohydrate degradation; glycolysis; pyruvate from D-glyceraldehyde 3-phosphate: step 4/5. Functionally, catalyzes the reversible conversion of 2-phosphoglycerate (2-PG) into phosphoenolpyruvate (PEP). It is essential for the degradation of carbohydrates via glycolysis. This chain is Enolase, found in Trichlorobacter lovleyi (strain ATCC BAA-1151 / DSM 17278 / SZ) (Geobacter lovleyi).